Reading from the N-terminus, the 216-residue chain is MOB kinase activator 3C (216 aa).

Zn(2+)-binding residues include Cys-82, Cys-87, His-164, and His-169.

It belongs to the MOB1/phocein family.

In terms of biological role, may regulate the activity of kinases. The protein is MOB kinase activator 3C (MOB3C) of Homo sapiens (Human).